We begin with the raw amino-acid sequence, 134 residues long: Small ribosomal subunit protein uS8c (134 aa).

The protein belongs to the universal ribosomal protein uS8 family. In terms of assembly, part of the 30S ribosomal subunit.

It localises to the plastid. The protein localises to the chloroplast. One of the primary rRNA binding proteins, it binds directly to 16S rRNA central domain where it helps coordinate assembly of the platform of the 30S subunit. This is Small ribosomal subunit protein uS8c (rps8) from Coffea arabica (Arabian coffee).